The following is a 247-amino-acid chain: Putative cyclin-T1-1 (247 aa).

This sequence belongs to the cyclin family. Cyclin T subfamily.

This chain is Putative cyclin-T1-1 (CYCT1-1), found in Arabidopsis thaliana (Mouse-ear cress).